We begin with the raw amino-acid sequence, 607 residues long: Protein PLASTID MOVEMENT IMPAIRED 2 (607 aa).

Coiled-coil stretches lie at residues 66–295 (KAKK…NAEL) and 329–445 (MLER…ESRR).

It belongs to the WEB family. Interacts with WEB1. Ubiquitous but preferentially in chloroplast-containing tissues.

The protein resides in the cytoplasm. Its function is as follows. Required for the chloroplast avoidance response under high intensity blue light. This avoidance response consists in the relocation of chloroplasts on the anticlinal side of exposed cells. Acts in association with WEB1 to maintain the velocity of chloroplast photorelocation movement via cp-actin filaments regulation. This chain is Protein PLASTID MOVEMENT IMPAIRED 2 (PMI2), found in Arabidopsis thaliana (Mouse-ear cress).